The primary structure comprises 377 residues: Probable protein phosphatase 2C 61 (377 aa).

The PPM-type phosphatase domain occupies 30–338 (AAGEFSMAAA…DDITAVVVFL (309 aa)). Residues aspartate 64, glycine 65, aspartate 269, and aspartate 329 each contribute to the Mn(2+) site.

This sequence belongs to the PP2C family. Requires Mg(2+) as cofactor. It depends on Mn(2+) as a cofactor.

The catalysed reaction is O-phospho-L-seryl-[protein] + H2O = L-seryl-[protein] + phosphate. It carries out the reaction O-phospho-L-threonyl-[protein] + H2O = L-threonyl-[protein] + phosphate. This chain is Probable protein phosphatase 2C 61, found in Oryza sativa subsp. japonica (Rice).